The following is a 255-amino-acid chain: Shieldin complex subunit 3 (255 aa).

Residues 33 to 88 (QDFPTHPLPRFIPWFPYDESKLPLKPERLPPVISEEAAESVKQYLAISEPGVKSQS) form a sufficient for interaction with MAD2L2 region. The tract at residues 116-135 (QTNAAHLDKNSGKEKQHKQR) is disordered.

Component of the shieldin complex, consisting of SHLD1, SHLD2, SHLD3 and MAD2L2/REV7. Within the complex, SHLD2 forms a scaffold which interacts with a SHLD3-MAD2L2 subcomplex via its N-terminus, and with SHLD1 via its C-terminus. Interacts with ASTE1.

It localises to the chromosome. Its function is as follows. Component of the shieldin complex, which plays an important role in repair of DNA double-stranded breaks (DSBs). During G1 and S phase of the cell cycle, the complex functions downstream of TP53BP1 to promote non-homologous end joining (NHEJ) and suppress DNA end resection. Mediates various NHEJ-dependent processes including immunoglobulin class-switch recombination, and fusion of unprotected telomeres. This Mus musculus (Mouse) protein is Shieldin complex subunit 3.